We begin with the raw amino-acid sequence, 79 residues long: Moronecidin (79 aa).

The N-terminal stretch at 1–22 (MKCATLSLVLSMVVLMAEPGDA) is a signal peptide. Residue Gly44 is modified to Glycine amide. The disordered stretch occupies residues 45-68 (GKAEQDQQDQQYQQDQQDQQAQQY). Residues 47 to 79 (AEQDQQDQQYQQDQQDQQAQQYQRFNRERAAFD) constitute a propeptide that is removed on maturation. The span at 52 to 68 (QDQQYQQDQQDQQAQQY) shows a compositional bias: low complexity.

In terms of tissue distribution, expressed in gill, skin, intestine, spleen, anterior kidney, and blood cells.

Its subcellular location is the secreted. In terms of biological role, antimicrobial peptide with broad-spectrum activity against Gram-positive and Gram-negative bacteria as well as against a variety of fungi. Rapidly inactivates both channel catfish herpesvirus (ED(50)=4 uM) and frog virus 3 (ED(50)=13 uM) over a wide temperature range. Seems to disrupt the membranes by adopting an alpha helical conformation. The polypeptide is Moronecidin (Morone chrysops (White bass)).